Here is a 264-residue protein sequence, read N- to C-terminus: 1-(5-phosphoribosyl)-5-[(5-phosphoribosylamino)methylideneamino] imidazole-4-carboxamide isomerase (264 aa).

The protein belongs to the HisA/HisF family.

The protein localises to the cytoplasm. The enzyme catalyses 1-(5-phospho-beta-D-ribosyl)-5-[(5-phospho-beta-D-ribosylamino)methylideneamino]imidazole-4-carboxamide = 5-[(5-phospho-1-deoxy-D-ribulos-1-ylimino)methylamino]-1-(5-phospho-beta-D-ribosyl)imidazole-4-carboxamide. The protein operates within amino-acid biosynthesis; L-histidine biosynthesis; L-histidine from 5-phospho-alpha-D-ribose 1-diphosphate: step 4/9. The protein is 1-(5-phosphoribosyl)-5-[(5-phosphoribosylamino)methylideneamino] imidazole-4-carboxamide isomerase (HIS6) of Yarrowia lipolytica (strain CLIB 122 / E 150) (Yeast).